Consider the following 448-residue polypeptide: Probable cytosolic Fe-S cluster assembly factor Bm6838 (448 aa).

The [4Fe-4S] cluster site is built by Cys-27, Cys-66, Cys-69, Cys-72, Cys-170, Cys-226, Cys-370, and Cys-374.

This sequence belongs to the NARF family.

Functionally, component of the cytosolic iron-sulfur (Fe/S) protein assembly machinery. Required for maturation of extramitochondrial Fe/S proteins. This is Probable cytosolic Fe-S cluster assembly factor Bm6838 from Brugia malayi (Filarial nematode worm).